A 297-amino-acid chain; its full sequence is Formamidopyrimidine-DNA glycosylase (297 aa).

Residue Pro-2 is the Schiff-base intermediate with DNA of the active site. Glu-3 serves as the catalytic Proton donor. The active-site Proton donor; for beta-elimination activity is the Lys-58. Residues His-104, Arg-127, and Lys-170 each coordinate DNA. The FPG-type zinc finger occupies Asn-261 to Arg-297. Arg-287 (proton donor; for delta-elimination activity) is an active-site residue.

Belongs to the FPG family. Monomer. Requires Zn(2+) as cofactor.

The catalysed reaction is Hydrolysis of DNA containing ring-opened 7-methylguanine residues, releasing 2,6-diamino-4-hydroxy-5-(N-methyl)formamidopyrimidine.. It catalyses the reaction 2'-deoxyribonucleotide-(2'-deoxyribose 5'-phosphate)-2'-deoxyribonucleotide-DNA = a 3'-end 2'-deoxyribonucleotide-(2,3-dehydro-2,3-deoxyribose 5'-phosphate)-DNA + a 5'-end 5'-phospho-2'-deoxyribonucleoside-DNA + H(+). In terms of biological role, involved in base excision repair of DNA damaged by oxidation or by mutagenic agents. Acts as a DNA glycosylase that recognizes and removes damaged bases. Has a preference for oxidized purines, such as 7,8-dihydro-8-oxoguanine (8-oxoG). Has AP (apurinic/apyrimidinic) lyase activity and introduces nicks in the DNA strand. Cleaves the DNA backbone by beta-delta elimination to generate a single-strand break at the site of the removed base with both 3'- and 5'-phosphates. This chain is Formamidopyrimidine-DNA glycosylase, found in Allorhizobium ampelinum (strain ATCC BAA-846 / DSM 112012 / S4) (Agrobacterium vitis (strain S4)).